The sequence spans 851 residues: DNA mismatch repair protein MutS (851 aa).

602 to 609 (GPNMSGKS) serves as a coordination point for ATP.

It belongs to the DNA mismatch repair MutS family.

In terms of biological role, this protein is involved in the repair of mismatches in DNA. It is possible that it carries out the mismatch recognition step. This protein has a weak ATPase activity. The chain is DNA mismatch repair protein MutS from Streptococcus pyogenes serotype M3 (strain SSI-1).